The chain runs to 484 residues: Probable autolysin PH (484 aa).

A Peptidase C51 domain is found at 5–148 (KNQAEKWFDN…YYDDPMYFIR (144 aa)). In terms of domain architecture, MurNAc-LAA spans 181–363 (IMLVAGHGYN…YSKLIAGAIH (183 aa)). The SH3b domain maps to 402–472 (KETGYYTVAN…IATGEVDKAG (71 aa)).

The catalysed reaction is Hydrolyzes the link between N-acetylmuramoyl residues and L-amino acid residues in certain cell-wall glycopeptides.. Has weak lytic activity toward S.aureus cells. Full-length protein has no activity, but fusion of the Peptidase C51 domain to the lysostaphin SH3 cell wall binding domain yields an active chimeric enzyme, suggesting that PH may be functional. The protein is Probable autolysin PH of Staphylococcus aureus (strain NCTC 8325 / PS 47).